The primary structure comprises 78 residues: Xibalbin-13 1 (78 aa).

An N-terminal signal peptide occupies residues 1 to 27 (MKEANTRRYIHLCLVVVLVSTIITTEA). Residues 28–31 (EDDR) constitute a propeptide that is removed on maturation. Intrachain disulfides connect cysteine 34-cysteine 49, cysteine 41-cysteine 54, cysteine 48-cysteine 65, and cysteine 56-cysteine 63. The residue at position 76 (serine 76) is a Serine amide.

It belongs to the xibalbin-13 family. In terms of tissue distribution, expressed by the venom gland.

It localises to the secreted. Probable neurotoxin. Strongly inhibits voltage-gated potassium channels (Kv1.1/KCNA1, Kv1.2/KCNA2, Kv1.3/KCNA3, and Kv1.6/KCNA6) and mildly inhibits sodium channels (Nav1.2/SCN2A, Nav1.4/SCN4A, Nav1.5/SCN5A, Nav1.6/SCN8A, and BgNav). Induces activation of protein kinase A type II (PKA-II) and MAP kinase Erk1/2 in primary nociceptive and non-nociceptive sensory neurons. Does not show cytotoxic activity. Does not have an impact on Ca2+, cAMP, and NO signaling in the cell types analyzed. Does not interfere with the adhesion of leukocytes to endothelial cells. The protein is Xibalbin-13 1 of Xibalbanus tulumensis (Blind cave remipede).